The chain runs to 143 residues: Hemoglobin subunit alpha (143 aa).

The 142-residue stretch at 2–143 (SLTARDKSVV…LSAALADKYR (142 aa)) folds into the Globin domain. His-60 contacts O2. Residue His-89 participates in heme b binding.

This sequence belongs to the globin family. Heterotetramer of two alpha chains and two beta chains. In terms of tissue distribution, red blood cells.

In terms of biological role, involved in oxygen transport from gills to the various peripheral tissues. The sequence is that of Hemoglobin subunit alpha (hba) from Salmo salar (Atlantic salmon).